Reading from the N-terminus, the 131-residue chain is Neo-calmodulin (131 aa).

EF-hand domains lie at 1–32 (EFKEAFSLFDKDGDGTITTKELGTVMRSLGQN), 33–68 (PTEAELQDMINEVDADGNGTIDFPEFLTMMARKMKD), 70–105 (DSEEEIREAFRVFDKDSNGYISAAELRHVMTNLGEK), and 106–131 (LTDEEVDEMIREADIDGDGQVNYEEF). Residues Asp10, Asp12, Asp14, Thr16, Glu21, Asp46, Asp48, Asn50, Thr52, Glu57, Asp83, Asp85, Asn87, Tyr89, Glu94, Asp119, Asp121, Asp123, Gln125, and Glu130 each coordinate Ca(2+).

Belongs to the calmodulin family.

In Gallus gallus (Chicken), this protein is Neo-calmodulin.